An 84-amino-acid polypeptide reads, in one-letter code: Cell division topological specificity factor (84 aa).

Belongs to the MinE family.

In terms of biological role, prevents the cell division inhibition by proteins MinC and MinD at internal division sites while permitting inhibition at polar sites. This ensures cell division at the proper site by restricting the formation of a division septum at the midpoint of the long axis of the cell. The sequence is that of Cell division topological specificity factor from Burkholderia cenocepacia (strain HI2424).